The primary structure comprises 233 residues: Ribosomal RNA-processing protein 14-C (233 aa).

Residues 32–65 adopt a coiled-coil conformation; sequence DRALLLQRRKEKAKARAEAKKLAKKESKAKQESK. Positions 47–64 are enriched in basic and acidic residues; that stretch reads RAEAKKLAKKESKAKQES. Disordered stretches follow at residues 47 to 87, 130 to 149, and 164 to 233; these read RAEA…DNHK, KRRIESMDEEKRRKIEESDK, and DNEQ…SKKK. S75 carries the post-translational modification Phosphoserine. Residues 122–223 adopt a coiled-coil conformation; sequence ALKHLEAKKR…ESKKSKKGKA (102 aa). Composition is skewed to basic and acidic residues over residues 133 to 149 and 180 to 209; these read IESMDEEKRRKIEESDK and KKKSSDAWKERKDNEKKAMLMRQQRREENL. Positions 210–233 are enriched in basic residues; it reads KKRRESKKSKKGKAPKKKKPSKKK.

This sequence belongs to the SURF6 family. In terms of assembly, component of the 90S and 60S pre-ribosomal particles.

It localises to the nucleus. The protein localises to the nucleolus. Involved in ribosome biogenesis and cell polarity. Required for the synthesis of both 40S and 60S ribosomal subunits and may also play some direct role in correct positioning of the mitotic spindle during mitosis. This is Ribosomal RNA-processing protein 14-C (rrp14c) from Schizosaccharomyces pombe (strain 972 / ATCC 24843) (Fission yeast).